A 305-amino-acid polypeptide reads, in one-letter code: Suppressor of activated egl-4 protein 2 (305 aa).

Residues 138–168 (KRGYESDSSDVSGVSHCSDAKRRRGRPRKDE) form a disordered region. The segment at residues 158–170 (KRRRGRPRKDEEA) is a DNA-binding region (a.T hook).

In terms of assembly, interacts with phosphorylated egl-4. May interact with itself. May be a component of a histone deacetylase complex containing saeg-2, saeg-1 and hda-2. In terms of tissue distribution, ubiquitously expressed.

It is found in the nucleus. As a likely component of a histone deacetylase complex, together with saeg-1 and hda-2, functions downstream of the cAMP-dependent kinase egl-4 to regulate the expression of genes required for egg-laying and foraging. This Caenorhabditis elegans protein is Suppressor of activated egl-4 protein 2.